The following is a 327-amino-acid chain: Phenylalanine--tRNA ligase alpha subunit (327 aa).

Position 252 (glutamate 252) interacts with Mg(2+).

Belongs to the class-II aminoacyl-tRNA synthetase family. Phe-tRNA synthetase alpha subunit type 1 subfamily. In terms of assembly, tetramer of two alpha and two beta subunits. Mg(2+) is required as a cofactor.

The protein resides in the cytoplasm. The enzyme catalyses tRNA(Phe) + L-phenylalanine + ATP = L-phenylalanyl-tRNA(Phe) + AMP + diphosphate + H(+). The chain is Phenylalanine--tRNA ligase alpha subunit from Yersinia pseudotuberculosis serotype O:1b (strain IP 31758).